We begin with the raw amino-acid sequence, 219 residues long: Cytidylate kinase (219 aa).

ATP is bound at residue 21 to 29 (GPAASGKGT).

The protein belongs to the cytidylate kinase family. Type 1 subfamily.

It is found in the cytoplasm. It catalyses the reaction CMP + ATP = CDP + ADP. It carries out the reaction dCMP + ATP = dCDP + ADP. In Rickettsia typhi (strain ATCC VR-144 / Wilmington), this protein is Cytidylate kinase.